Consider the following 305-residue polypeptide: tRNA uridine(34) hydroxylase (305 aa).

The region spanning 136–230 (ADENTVVVDK…YLEEVPREQS (95 aa)) is the Rhodanese domain. C190 acts as the Cysteine persulfide intermediate in catalysis.

This sequence belongs to the TrhO family.

The enzyme catalyses uridine(34) in tRNA + AH2 + O2 = 5-hydroxyuridine(34) in tRNA + A + H2O. Catalyzes oxygen-dependent 5-hydroxyuridine (ho5U) modification at position 34 in tRNAs. This Brucella melitensis biotype 1 (strain ATCC 23456 / CCUG 17765 / NCTC 10094 / 16M) protein is tRNA uridine(34) hydroxylase.